We begin with the raw amino-acid sequence, 248 residues long: Transcriptional activator protein FnrL (248 aa).

One can recognise an HTH crp-type domain in the interval 154 to 232 (KTAREKIASL…KRHVIVTDFA (79 aa)). Residues 191–210 (REEMADYLGLTLETVSRQVS) constitute a DNA-binding region (H-T-H motif).

Anaerobic regulatory protein; transcriptional activator of hemA. Appears to regulate other genes. This chain is Transcriptional activator protein FnrL (fnrL), found in Cereibacter sphaeroides (strain ATCC 17023 / DSM 158 / JCM 6121 / CCUG 31486 / LMG 2827 / NBRC 12203 / NCIMB 8253 / ATH 2.4.1.) (Rhodobacter sphaeroides).